A 230-amino-acid chain; its full sequence is NAD-dependent protein deacylase 1 (230 aa).

The Deacetylase sirtuin-type domain maps to 1–226 (MESGIPTYRE…SHLSAFLSRE (226 aa)). Substrate-binding residues include Tyr41 and Arg44. Position 75 to 78 (75 to 78 (QNID)) interacts with NAD(+). His93 serves as the catalytic Proton acceptor. Residues Cys101, Cys104, Cys128, and Cys131 each coordinate Zn(2+). NAD(+) contacts are provided by residues 168–170 (GTS), 194–196 (NTV), and Ala212.

Belongs to the sirtuin family. Class III subfamily. Zn(2+) is required as a cofactor.

It localises to the cytoplasm. It catalyses the reaction N(6)-acetyl-L-lysyl-[protein] + NAD(+) + H2O = 2''-O-acetyl-ADP-D-ribose + nicotinamide + L-lysyl-[protein]. It carries out the reaction N(6)-succinyl-L-lysyl-[protein] + NAD(+) + H2O = 2''-O-succinyl-ADP-D-ribose + nicotinamide + L-lysyl-[protein]. In terms of biological role, NAD-dependent lysine deacetylase and desuccinylase that specifically removes acetyl and succinyl groups on target proteins. Modulates the activities of several proteins which are inactive in their acylated form. The chain is NAD-dependent protein deacylase 1 from Pseudomonas syringae pv. tomato (strain ATCC BAA-871 / DC3000).